We begin with the raw amino-acid sequence, 62 residues long: Photosystem II reaction center protein Z (62 aa).

The next 2 helical transmembrane spans lie at L8–V28 and Y41–V61.

The protein belongs to the PsbZ family. PSII is composed of 1 copy each of membrane proteins PsbA, PsbB, PsbC, PsbD, PsbE, PsbF, PsbH, PsbI, PsbJ, PsbK, PsbL, PsbM, PsbT, PsbX, PsbY, PsbZ, Psb30/Ycf12, at least 3 peripheral proteins of the oxygen-evolving complex and a large number of cofactors. It forms dimeric complexes.

The protein localises to the plastid. It localises to the chloroplast thylakoid membrane. May control the interaction of photosystem II (PSII) cores with the light-harvesting antenna, regulates electron flow through the 2 photosystem reaction centers. PSII is a light-driven water plastoquinone oxidoreductase, using light energy to abstract electrons from H(2)O, generating a proton gradient subsequently used for ATP formation. In Guillardia theta (Cryptophyte), this protein is Photosystem II reaction center protein Z.